Here is a 465-residue protein sequence, read N- to C-terminus: Putative F-box/FBD/LRR-repeat protein At1g22000 (465 aa).

The 47-residue stretch at 28-74 (ETRICALPDDLLLQILPHVPTKEAVATSILSKQWRYVWLMLPKLEFK) folds into the F-box domain. LRR repeat units follow at residues 154–181 (CLTL…SLHY), 182–207 (VVYK…SVHS), 210–230 (DDNL…NYDE), 248–273 (NEVE…HLSE), and 339–365 (ISLV…TIDN). An FBD domain is found at 373 to 424 (SWNQPSSIPGCLLSHLETFRWRGYGGREDAKKLLMTYILANSKCLKTVEISL).

This Arabidopsis thaliana (Mouse-ear cress) protein is Putative F-box/FBD/LRR-repeat protein At1g22000.